A 151-amino-acid chain; its full sequence is Putative pre-16S rRNA nuclease (151 aa).

Belongs to the YqgF nuclease family.

Its subcellular location is the cytoplasm. In terms of biological role, could be a nuclease involved in processing of the 5'-end of pre-16S rRNA. The protein is Putative pre-16S rRNA nuclease of Pelagibacter ubique (strain HTCC1062).